The sequence spans 170 residues: NADH-quinone oxidoreductase subunit B (170 aa).

[4Fe-4S] cluster is bound by residues Cys37, Cys38, Cys102, and Cys131.

Belongs to the complex I 20 kDa subunit family. As to quaternary structure, NDH-1 is composed of 14 different subunits. Subunits NuoB, C, D, E, F, and G constitute the peripheral sector of the complex. [4Fe-4S] cluster is required as a cofactor.

It localises to the cell inner membrane. The catalysed reaction is a quinone + NADH + 5 H(+)(in) = a quinol + NAD(+) + 4 H(+)(out). Its function is as follows. NDH-1 shuttles electrons from NADH, via FMN and iron-sulfur (Fe-S) centers, to quinones in the respiratory chain. The immediate electron acceptor for the enzyme in this species is believed to be ubiquinone. Couples the redox reaction to proton translocation (for every two electrons transferred, four hydrogen ions are translocated across the cytoplasmic membrane), and thus conserves the redox energy in a proton gradient. This chain is NADH-quinone oxidoreductase subunit B, found in Geobacter metallireducens (strain ATCC 53774 / DSM 7210 / GS-15).